Reading from the N-terminus, the 282-residue chain is 2-dehydro-3-deoxyphosphooctonate aldolase (282 aa).

Belongs to the KdsA family.

It is found in the cytoplasm. It catalyses the reaction D-arabinose 5-phosphate + phosphoenolpyruvate + H2O = 3-deoxy-alpha-D-manno-2-octulosonate-8-phosphate + phosphate. It functions in the pathway carbohydrate biosynthesis; 3-deoxy-D-manno-octulosonate biosynthesis; 3-deoxy-D-manno-octulosonate from D-ribulose 5-phosphate: step 2/3. Its pathway is bacterial outer membrane biogenesis; lipopolysaccharide biosynthesis. This chain is 2-dehydro-3-deoxyphosphooctonate aldolase, found in Granulibacter bethesdensis (strain ATCC BAA-1260 / CGDNIH1).